We begin with the raw amino-acid sequence, 162 residues long: Allophycocyanin alpha-B chain (162 aa).

The residue at position 71 (Asn71) is an N4-methylasparagine. Cys81 provides a ligand contact to (2R,3E)-phycocyanobilin.

The protein belongs to the phycobiliprotein family. Contains one covalently linked phycocyanobilin chromophore.

It localises to the plastid. The protein resides in the cyanelle thylakoid membrane. In terms of biological role, allophycocyanin is a photosynthetic bile pigment-protein complex with maximum absorption at approximately 650 nanometers. The polypeptide is Allophycocyanin alpha-B chain (apcD) (Cyanophora paradoxa).